The sequence spans 94 residues: Aspartyl/glutamyl-tRNA(Asn/Gln) amidotransferase subunit C (94 aa).

It belongs to the GatC family. Heterotrimer of A, B and C subunits.

The catalysed reaction is L-glutamyl-tRNA(Gln) + L-glutamine + ATP + H2O = L-glutaminyl-tRNA(Gln) + L-glutamate + ADP + phosphate + H(+). It carries out the reaction L-aspartyl-tRNA(Asn) + L-glutamine + ATP + H2O = L-asparaginyl-tRNA(Asn) + L-glutamate + ADP + phosphate + 2 H(+). In terms of biological role, allows the formation of correctly charged Asn-tRNA(Asn) or Gln-tRNA(Gln) through the transamidation of misacylated Asp-tRNA(Asn) or Glu-tRNA(Gln) in organisms which lack either or both of asparaginyl-tRNA or glutaminyl-tRNA synthetases. The reaction takes place in the presence of glutamine and ATP through an activated phospho-Asp-tRNA(Asn) or phospho-Glu-tRNA(Gln). The sequence is that of Aspartyl/glutamyl-tRNA(Asn/Gln) amidotransferase subunit C from Nitratidesulfovibrio vulgaris (strain ATCC 29579 / DSM 644 / CCUG 34227 / NCIMB 8303 / VKM B-1760 / Hildenborough) (Desulfovibrio vulgaris).